Here is a 1374-residue protein sequence, read N- to C-terminus: Probable multidrug resistance-associated protein lethal(2)03659 (1374 aa).

A disordered region spans residues 1 to 40 (MDKQPVLEPTFDSVSERENTSIEESSLLENNGFDHRNKDE). Helical transmembrane passes span 159 to 179 (LLRVFGWQLGFPGLAIFVVEL), 205 to 225 (AGFYYAVAQIVISALTVMILT), 282 to 302 (YTVHYLWVGPLQVLVITYLMY), 305 to 325 (IGISAVFGVLFMLLFMPIQMY), 404 to 424 (IFLSLVGYVILGKVFTPEIAF), and 426 to 446 (ITAYYNVLLAAMSIYVPSAII). One can recognise an ABC transmembrane type-1 1 domain in the interval 168-449 (GFPGLAIFVV…YVPSAIIQTA (282 aa)). Residues 466 to 492 (ELGSSDKSEGPSKDTVPGNPPSNNNEA) are disordered. Residues 499 to 722 (ISIRDLKAKW…GLITGLGSLS (224 aa)) form the ABC transporter 1 domain. 534 to 541 (GLTGSGKS) lines the ATP pocket. Asn-561 carries N-linked (GlcNAc...) asparagine glycosylation. Positions 723 to 766 (KTDKAKTEEQEPLNLNSPDNKNEVTPIKENSEQTVGGSSSGKEH) are disordered. 5 helical membrane-spanning segments follow: residues 787–807 (GGGLVAFLVMLSSSVLAQVAV), 845–865 (LIIILSVIMNLSSSFLLFNIA), 913–933 (VVLVDVMQIALWLAGIIIVIA), 938–958 (LLLVPTLMLSVIFYHLRNLYL), and 1025–1045 (YCMNCICVIYISIITLSFFAF). An ABC transmembrane type-1 2 domain is found at 793 to 1079 (FLVMLSSSVL…GVRQTAELEN (287 aa)). In terms of domain architecture, ABC transporter 2 spans 1119-1352 (FKELNLRYTP…SDSKVFHNLV (234 aa)). 1153–1160 (GRTGAGKS) contributes to the ATP binding site. N-linked (GlcNAc...) asparagine glycans are attached at residues Asn-1254 and Asn-1353.

The protein belongs to the ABC transporter superfamily. ABCC family. Conjugate transporter (TC 3.A.1.208) subfamily. Uniform expression in embryos.

The protein resides in the membrane. Its function is as follows. Vital for development. This Drosophila melanogaster (Fruit fly) protein is Probable multidrug resistance-associated protein lethal(2)03659 (l(2)03659).